The following is a 152-amino-acid chain: Transcriptional regulator MraZ (152 aa).

SpoVT-AbrB domains follow at residues A5–E52 and A81–A124.

The protein belongs to the MraZ family. Forms oligomers.

The protein localises to the cytoplasm. It is found in the nucleoid. In Idiomarina loihiensis (strain ATCC BAA-735 / DSM 15497 / L2-TR), this protein is Transcriptional regulator MraZ.